Consider the following 26-residue polypeptide: Oxyopinin-3a (26 aa).

Expressed by the venom gland.

It localises to the secreted. Functionally, may have cytolytic and antimicrobial activity. This Oxyopes takobius (Lynx spider) protein is Oxyopinin-3a.